A 430-amino-acid chain; its full sequence is Resistance to inhibitors of cholinesterase protein 19 (430 aa).

Residues 56 to 260 (ASDNELDTCL…TSRAFETLAE (205 aa)) form the AH domain. A disordered region spans residues 279-342 (GTKPERERKS…SPLIEDVDDE (64 aa)). Residues 281-294 (KPERERKSEKEESA) show a composition bias toward basic and acidic residues.

Interacts with the GTPase activator protein tbc-8; the interaction is direct and may be required for the activation of rab-2 and dense vesicle maturation in cholinergic motoneurons. Interacts with rund-1. As to expression, expressed in all neurons. Highly expressed in m2 pharyngeal neurons and some pharyngeal interneurons. Also expressed in the excretory canal and the gland cells located just below the nerve ring in the head.

It is found in the cytoplasm. The protein resides in the cytoplasmic vesicle membrane. Functionally, may be involved in neurotransmitter secretion. In association with the GTPase activator protein tbc-8 activates rab-2 during dense core vesicle maturation in cholinergic motoneurons. This chain is Resistance to inhibitors of cholinesterase protein 19, found in Caenorhabditis elegans.